The sequence spans 560 residues: Alpha-farnesene synthase (560 aa).

Asp308, Asp312, and Glu462 together coordinate Mg(2+). Positions 308 to 312 (DDIYD) match the DDXXD motif motif.

This sequence belongs to the terpene synthase family. Tpsa subfamily. Mg(2+) is required as a cofactor. Expressed in the rind tissues of ripe fruits.

The protein localises to the cytoplasm. The enzyme catalyses (2E,6E)-farnesyl diphosphate = (3E,6E)-alpha-farnesene + diphosphate. It participates in secondary metabolite biosynthesis; terpenoid biosynthesis. In terms of biological role, sesquiterpene synthase producing exclusively alpha-farnesene. Associated with the production of sesquiterpenes responsible for the aroma of the fruit. The protein is Alpha-farnesene synthase of Cucumis melo (Muskmelon).